Consider the following 186-residue polypeptide: MEPQTKDPDPLPRLVHIGEIQFNLGEVTTGGVTPRGTFIFCPITGGHFTTVFPLPDGFGIHSEAIEGLRAEVLPGGGDYPLIHNNELAELNVSVVAKGLNNDHIFRITSFGICEWNKLIFDMMGQTAAARSTEMGEINAWQVFRINTDSPEYAWLNWACIIGQERLIYEDSRMAKTHMKLFQFLVK.

Residues 24 to 43 form a helical membrane-spanning segment; sequence LGEVTTGGVTPRGTFIFCPI.

It localises to the membrane. Its pathway is sesquiterpene biosynthesis. Functionally, part of the gene cluster that mediates the biosynthesis of PR-toxin, a bicyclic sesquiterpene belonging to the eremophilane class and acting as a mycotoxin. The first step of the pathway is catalyzed by the aristolochene synthase which performs the cyclization of trans,trans-farnesyl diphosphate (FPP) to the bicyclic sesquiterpene aristolochene. Following the formation of aristolochene, the non-oxygenated aristolochene is converted to the trioxygenated intermediate eremofortin B, via 7-epi-neopetasone. This conversion appears to involve three enzymes, a hydroxysterol oxidase-like enzyme, the quinone-oxidase prx3 that forms the quinone-type-structure in the bicyclic nucleus of aristolochene with the C8-oxo group and the C-3 hydroxyl group, and the P450 monooxygenase ORF6 that introduces the epoxide at the double bond between carbons 1 and 2. No monoxy or dioxy-intermediates have been reported to be released to the broth, so these three early oxidative reactions may be coupled together. Eremofortin B is further oxidized by another P450 monooxygenase, that introduces a second epoxide between carbons 7 and 11 prior to acetylation to eremofortin A by the acetyltransferase ORF8. The second epoxidation may be performed by a second P450 monooxygenase. After the acetylation step, eremofortin A is converted to eremofortin C and then to PR-toxin. First the conversion of eremofortin A to eremofortin C proceeds by oxidation of the side chain of the molecule at C-12 and is catalyzed by the short-chain oxidoreductase prx1. The cytochrome P450 monooxygenase ORF6 is probably also involved in this step. The primary alcohol formed at C-12 is finally oxidized by the short-chain alcohol dehydrogenase prx4 that forms PR-toxin. This chain is PR-toxin biosynthesis cluster protein 7, found in Penicillium roqueforti (strain FM164).